The following is a 133-amino-acid chain: Putative dispanin subfamily A member 2d (133 aa).

Residues 1–57 lie on the Extracellular side of the membrane; that stretch reads MNHTVQTFFSPVNSGQPPNYEMLKEEHKVAVLGVPHNPAPPTSTVIHIRSKTSVPHH. K24 is covalently cross-linked (Glycyl lysine isopeptide (Lys-Gly) (interchain with G-Cter in ubiquitin)). The helical transmembrane segment at 58–78 threads the bilayer; sequence VVWSLFNTLFMNPCCLGFIAF. Over 79–107 the chain is Cytoplasmic; sequence AYSVKSRDRKMVGNVTGAQAYASTTKCLN. Residues K83, K88, and K104 each participate in a glycyl lysine isopeptide (Lys-Gly) (interchain with G-Cter in ubiquitin) cross-link. Residues 108 to 128 form a helical membrane-spanning segment; that stretch reads IWALILGILMTILLIIIPVLI. The Extracellular segment spans residues 129–133; the sequence is FQAHR.

The protein belongs to the CD225/Dispanin family.

The protein localises to the membrane. This Homo sapiens (Human) protein is Putative dispanin subfamily A member 2d.